We begin with the raw amino-acid sequence, 690 residues long: Glycine--tRNA ligase beta subunit (690 aa).

The protein belongs to the class-II aminoacyl-tRNA synthetase family. In terms of assembly, tetramer of two alpha and two beta subunits.

The protein resides in the cytoplasm. It catalyses the reaction tRNA(Gly) + glycine + ATP = glycyl-tRNA(Gly) + AMP + diphosphate. In Proteus mirabilis (strain HI4320), this protein is Glycine--tRNA ligase beta subunit.